Here is a 488-residue protein sequence, read N- to C-terminus: Palmitoleoyl-protein carboxylesterase notum1' (488 aa).

Residues 1-19 (MAGTLCVTLLLLLSTIAVG) form the signal peptide. Asn90 carries an N-linked (GlcNAc...) asparagine glycan. Active-site charge relay system residues include Ser226, Asp334, and His383.

The protein belongs to the pectinacetylesterase family. Notum subfamily. Expressed in the egg and through cleavage to gastrulation stages. Enriched in the animal (prospective ectoderm) and dorsal regions in early gastrula. Shows a dynamic expression during embryogenesis, in particular during neural induction and antero-posterior (AP) patterning.

The protein localises to the secreted. It catalyses the reaction [Wnt protein]-O-(9Z)-hexadecenoyl-L-serine + H2O = [Wnt protein]-L-serine + (9Z)-hexadecenoate + H(+). Functionally, carboxylesterase that acts as a key negative regulator of the Wnt signaling pathway by specifically mediating depalmitoleoylation of WNT proteins. Serine palmitoleoylation of WNT proteins is required for efficient binding to frizzled receptors. Functions in the prospective ectoderm and is required for neural induction. This is Palmitoleoyl-protein carboxylesterase notum1' from Xenopus laevis (African clawed frog).